Here is a 671-residue protein sequence, read N- to C-terminus: DNA ligase (671 aa).

NAD(+)-binding positions include 31 to 35 (DAEYD), 80 to 81 (SL), and Glu-110. Catalysis depends on Lys-112, which acts as the N6-AMP-lysine intermediate. The NAD(+) site is built by Arg-133, Glu-167, Lys-283, and Lys-307. 4 residues coordinate Zn(2+): Cys-401, Cys-404, Cys-419, and Cys-424. One can recognise a BRCT domain in the interval 587-671 (EEELVFTGKT…YLPDEGGLNE (85 aa)).

It belongs to the NAD-dependent DNA ligase family. LigA subfamily. It depends on Mg(2+) as a cofactor. Requires Mn(2+) as cofactor.

The catalysed reaction is NAD(+) + (deoxyribonucleotide)n-3'-hydroxyl + 5'-phospho-(deoxyribonucleotide)m = (deoxyribonucleotide)n+m + AMP + beta-nicotinamide D-nucleotide.. DNA ligase that catalyzes the formation of phosphodiester linkages between 5'-phosphoryl and 3'-hydroxyl groups in double-stranded DNA using NAD as a coenzyme and as the energy source for the reaction. It is essential for DNA replication and repair of damaged DNA. The protein is DNA ligase of Listeria monocytogenes serotype 4b (strain F2365).